Consider the following 289-residue polypeptide: tRNA pseudouridine synthase B (289 aa).

The Nucleophile role is filled by aspartate 38.

Belongs to the pseudouridine synthase TruB family. Type 1 subfamily.

It carries out the reaction uridine(55) in tRNA = pseudouridine(55) in tRNA. Responsible for synthesis of pseudouridine from uracil-55 in the psi GC loop of transfer RNAs. The polypeptide is tRNA pseudouridine synthase B (Clostridium novyi (strain NT)).